The following is a 162-amino-acid chain: NADH-quinone oxidoreductase subunit I (162 aa).

2 4Fe-4S ferredoxin-type domains span residues leucine 53–glutamate 83 and threonine 93–asparagine 122. 8 residues coordinate [4Fe-4S] cluster: cysteine 63, cysteine 66, cysteine 69, cysteine 73, cysteine 102, cysteine 105, cysteine 108, and cysteine 112.

The protein belongs to the complex I 23 kDa subunit family. In terms of assembly, NDH-1 is composed of 14 different subunits. Subunits NuoA, H, J, K, L, M, N constitute the membrane sector of the complex. Requires [4Fe-4S] cluster as cofactor.

It is found in the cell inner membrane. It catalyses the reaction a quinone + NADH + 5 H(+)(in) = a quinol + NAD(+) + 4 H(+)(out). In terms of biological role, NDH-1 shuttles electrons from NADH, via FMN and iron-sulfur (Fe-S) centers, to quinones in the respiratory chain. The immediate electron acceptor for the enzyme in this species is believed to be ubiquinone. Couples the redox reaction to proton translocation (for every two electrons transferred, four hydrogen ions are translocated across the cytoplasmic membrane), and thus conserves the redox energy in a proton gradient. The chain is NADH-quinone oxidoreductase subunit I from Granulibacter bethesdensis (strain ATCC BAA-1260 / CGDNIH1).